Consider the following 93-residue polypeptide: Phosphoribosyl-ATP pyrophosphatase (93 aa).

The protein belongs to the PRA-PH family.

The protein localises to the cytoplasm. The catalysed reaction is 1-(5-phospho-beta-D-ribosyl)-ATP + H2O = 1-(5-phospho-beta-D-ribosyl)-5'-AMP + diphosphate + H(+). Its pathway is amino-acid biosynthesis; L-histidine biosynthesis; L-histidine from 5-phospho-alpha-D-ribose 1-diphosphate: step 2/9. This is Phosphoribosyl-ATP pyrophosphatase from Mycolicibacterium vanbaalenii (strain DSM 7251 / JCM 13017 / BCRC 16820 / KCTC 9966 / NRRL B-24157 / PYR-1) (Mycobacterium vanbaalenii).